The following is a 684-amino-acid chain: Protein SEEDLING PLASTID DEVELOPMENT 1 (684 aa).

Residues 1-78 constitute a chloroplast transit peptide; it reads MRALNSRLVL…FSFDVRSPSS (78 aa). The interval 33–91 is disordered; that stretch reads SDSSSSFRRTRGARQRIASSKSPASSPSPVRRPSDGFSFDVRSPSSDSSISSRKSPTTA. Residues 50–88 are compositionally biased toward low complexity; sequence ASSKSPASSPSPVRRPSDGFSFDVRSPSSDSSISSRKSP. Residue 220 to 227 participates in ATP binding; sequence GSPGVGKT. Residues 651 to 684 form a disordered region; that stretch reads PRRSTKKTLTSSSPQKSADGSMGTTGTRLPFLKD. Residues 657-667 show a composition bias toward low complexity; the sequence is KTLTSSSPQKS.

This sequence belongs to the ycf45 family.

The protein resides in the plastid. It localises to the chloroplast membrane. The protein localises to the chloroplast envelope. In terms of biological role, required during eoplast (a highly reduced plastid type present during the degreening and dehydration stages of seed maturation) development in embryos and early stages of eoplast redifferentiation during seedling growth. This chain is Protein SEEDLING PLASTID DEVELOPMENT 1, found in Arabidopsis thaliana (Mouse-ear cress).